Here is a 486-residue protein sequence, read N- to C-terminus: MSYNNKSIKELHELLVNKEISALELTKATLSDIQAREPQIDAFLKVTEEKALKEAAAIDARGINPDVVTDGISIGVKDNIVTEGIETTAASKILGGWIPPYNATVANKLSQSGLITIGKLNMDEFAMGGSGENSSIKPTKNVWDQTKVPGGSSSGSAASVASGEVRLSLGSDTGGSIRQPAAFNGIVGLKPTYGRVSRFGLIAFASSLDQIGPLTPTVEENAQLLNVISGFDKNDSTSSNVSVPDFTSKIGQDIKGMKIALPKEYFGEGIDEKVKEQILAAAKHLEKLGAIVEEVSLPHSKYGVAVYYIIASSEASSNLQRFDGIRYGYRAQDIKNLEDLYVKSRSEGFGPEVQRRIMLGTFSLSAGSYDKHFKKAGQVRTLIINDFAKVFEKYDLILGPTTPTAAWDLGARVDDPISMYLADLLTIPVNLAGLPGISIPAGFADGLPVGMQLIGKRYDEETIYQVAAAFEATTDFHKKQPIIFGK.

Catalysis depends on charge relay system residues K77 and S152. S176 (acyl-ester intermediate) is an active-site residue.

Belongs to the amidase family. GatA subfamily. As to quaternary structure, heterotrimer of A, B and C subunits.

The catalysed reaction is L-glutamyl-tRNA(Gln) + L-glutamine + ATP + H2O = L-glutaminyl-tRNA(Gln) + L-glutamate + ADP + phosphate + H(+). Its function is as follows. Allows the formation of correctly charged Gln-tRNA(Gln) through the transamidation of misacylated Glu-tRNA(Gln) in organisms which lack glutaminyl-tRNA synthetase. The reaction takes place in the presence of glutamine and ATP through an activated gamma-phospho-Glu-tRNA(Gln). This Lactococcus lactis subsp. cremoris (strain SK11) protein is Glutamyl-tRNA(Gln) amidotransferase subunit A.